The chain runs to 122 residues: Large ribosomal subunit protein uL14 (122 aa).

Belongs to the universal ribosomal protein uL14 family. In terms of assembly, part of the 50S ribosomal subunit. Forms a cluster with proteins L3 and L19. In the 70S ribosome, L14 and L19 interact and together make contacts with the 16S rRNA in bridges B5 and B8.

In terms of biological role, binds to 23S rRNA. Forms part of two intersubunit bridges in the 70S ribosome. In Shewanella denitrificans (strain OS217 / ATCC BAA-1090 / DSM 15013), this protein is Large ribosomal subunit protein uL14.